Here is a 1299-residue protein sequence, read N- to C-terminus: DNA-directed RNA polymerase subunit beta' (1299 aa).

The Zn(2+) site is built by Cys-60, Cys-62, Cys-75, and Cys-78. Asp-535, Asp-537, and Asp-539 together coordinate Mg(2+). Residues Cys-877, Cys-954, Cys-961, and Cys-964 each contribute to the Zn(2+) site.

It belongs to the RNA polymerase beta' chain family. As to quaternary structure, the RNAP catalytic core consists of 2 alpha, 1 beta, 1 beta' and 1 omega subunit. When a sigma factor is associated with the core the holoenzyme is formed, which can initiate transcription. Mg(2+) is required as a cofactor. It depends on Zn(2+) as a cofactor.

The enzyme catalyses RNA(n) + a ribonucleoside 5'-triphosphate = RNA(n+1) + diphosphate. In terms of biological role, DNA-dependent RNA polymerase catalyzes the transcription of DNA into RNA using the four ribonucleoside triphosphates as substrates. This chain is DNA-directed RNA polymerase subunit beta', found in Pseudarthrobacter chlorophenolicus (strain ATCC 700700 / DSM 12829 / CIP 107037 / JCM 12360 / KCTC 9906 / NCIMB 13794 / A6) (Arthrobacter chlorophenolicus).